The chain runs to 85 residues: Large ribosomal subunit protein bL31B (85 aa).

This sequence belongs to the bacterial ribosomal protein bL31 family. Type B subfamily. As to quaternary structure, part of the 50S ribosomal subunit.

The polypeptide is Large ribosomal subunit protein bL31B (Pseudarthrobacter chlorophenolicus (strain ATCC 700700 / DSM 12829 / CIP 107037 / JCM 12360 / KCTC 9906 / NCIMB 13794 / A6) (Arthrobacter chlorophenolicus)).